Here is a 339-residue protein sequence, read N- to C-terminus: MFITTWCSNDAPDSSVPRTRSKTKFTPKVRDLLFHCRYEIVDIVDEGYDMPASIGFYNDIIREFVTDDFCLTSLFEDNGQDSNNIQHRNDGCIWSIFDRLMNTNKFRDFDVIQGTFDTLQIIFFTNHESANNFIKNNLPRFMQTLHKLIACSNFFIQAKSFKFLNELFTAQTNYETRSLWMAEPAFIKLVVLAIQSNKHAVRSRAVSILEIFIRNPRNSPEVHEFIGRNRNVLIAFFFNSAPIHYYQGSPNEKEDAQYARMAYKLLNWDMQRPFTQEQLQDFEEGWTHQKKMREEQLVRTCFHDNNPRLPKVNHVYRTRIIPNQQFLREPLKFGNPFRQ.

It belongs to the Mo25 family.

The sequence is that of MO25-like protein 3 (mop-25.3) from Caenorhabditis elegans.